A 93-amino-acid polypeptide reads, in one-letter code: UPF0728 protein C10orf53 homolog (93 aa).

The protein belongs to the UPF0728 family.

In Xenopus tropicalis (Western clawed frog), this protein is UPF0728 protein C10orf53 homolog.